We begin with the raw amino-acid sequence, 644 residues long: UvrABC system protein C (644 aa).

The GIY-YIG domain maps to 47-125; sequence ARPGVYRMLD…IKRYRPPYNV (79 aa). Residues 235-270 form the UVR domain; the sequence is TAVQKRLGEAMTRAADAMDFEQAAVLRDRLKALTFI.

It belongs to the UvrC family. In terms of assembly, interacts with UvrB in an incision complex.

Its subcellular location is the cytoplasm. The UvrABC repair system catalyzes the recognition and processing of DNA lesions. UvrC both incises the 5' and 3' sides of the lesion. The N-terminal half is responsible for the 3' incision and the C-terminal half is responsible for the 5' incision. The sequence is that of UvrABC system protein C from Sphingopyxis alaskensis (strain DSM 13593 / LMG 18877 / RB2256) (Sphingomonas alaskensis).